The primary structure comprises 212 residues: Thymidylate kinase (212 aa).

Position 10–17 (glycine 10–threonine 17) interacts with ATP.

It belongs to the thymidylate kinase family.

It carries out the reaction dTMP + ATP = dTDP + ADP. Functionally, phosphorylation of dTMP to form dTDP in both de novo and salvage pathways of dTTP synthesis. In Exiguobacterium sibiricum (strain DSM 17290 / CCUG 55495 / CIP 109462 / JCM 13490 / 255-15), this protein is Thymidylate kinase.